Consider the following 654-residue polypeptide: Acetyl-coenzyme A synthetase (654 aa).

CoA contacts are provided by residues 196–199 (RGGK) and Thr-316. Residues 392–394 (GEP), 416–421 (DTWWQT), Asp-506, and Arg-521 each bind ATP. Ser-529 provides a ligand contact to CoA. Arg-532 contacts ATP. Residues Val-543 and Val-548 each contribute to the Mg(2+) site. An N6-acetyllysine modification is found at Lys-618.

It belongs to the ATP-dependent AMP-binding enzyme family. Mg(2+) serves as cofactor. Acetylated. Deacetylation by the SIR2-homolog deacetylase activates the enzyme.

The catalysed reaction is acetate + ATP + CoA = acetyl-CoA + AMP + diphosphate. Functionally, catalyzes the conversion of acetate into acetyl-CoA (AcCoA), an essential intermediate at the junction of anabolic and catabolic pathways. AcsA undergoes a two-step reaction. In the first half reaction, AcsA combines acetate with ATP to form acetyl-adenylate (AcAMP) intermediate. In the second half reaction, it can then transfer the acetyl group from AcAMP to the sulfhydryl group of CoA, forming the product AcCoA. This is Acetyl-coenzyme A synthetase from Methylobacillus flagellatus (strain ATCC 51484 / DSM 6875 / VKM B-1610 / KT).